Here is a 517-residue protein sequence, read N- to C-terminus: MSEQVALNPSEISELIRKKIDQFSVVSEARNEGTIVSLKDGIVRLHGLADVMAGEMIEFPGGVYGLALNLERDSVGAVILGDSSTLAEGQKGKCTGRILEVPVGKGLLGRVVDALGNPIDGKGPIESSGMSPIEKVAPGVITRKSVDQPVQTGLKAIDAMIPVGRGQRELIIGDRQTGKTAIAIDAIINQKGTGVKCVYVAVGQKASSVASIVRKLEEHGALEHTIVVVAGASDSAALQYIAPYSGCTMGEYFMERGEDALIVYDDLTKQAWAYRQISLLLRRPPGREAYPGDIFYLHSRLLERAARINADEVEKLTNGEVKGKTGSLTALPIIETQAGDVSAFVPTNVISITDGQIFLDVDLFNSGVRPAINSGLSVSRVGGAAQTKIMKKLGGGTRLALAQFRELEAFSQFASDLDDATRKQLERGQRITELMKQKQYSPLTVAEMGVSLFVVEKGYLDDVPVNEISSFEASLHDYMRSTHAALLHAINEAGAYDNEIEAKLKKAVEEFKNTGSW.

173–180 is a binding site for ATP; that stretch reads GDRQTGKT.

The protein belongs to the ATPase alpha/beta chains family. F-type ATPases have 2 components, CF(1) - the catalytic core - and CF(0) - the membrane proton channel. CF(1) has five subunits: alpha(3), beta(3), gamma(1), delta(1), epsilon(1). CF(0) has three main subunits: a(1), b(2) and c(9-12). The alpha and beta chains form an alternating ring which encloses part of the gamma chain. CF(1) is attached to CF(0) by a central stalk formed by the gamma and epsilon chains, while a peripheral stalk is formed by the delta and b chains.

It is found in the cell inner membrane. It carries out the reaction ATP + H2O + 4 H(+)(in) = ADP + phosphate + 5 H(+)(out). In terms of biological role, produces ATP from ADP in the presence of a proton gradient across the membrane. The alpha chain is a regulatory subunit. In Legionella pneumophila (strain Lens), this protein is ATP synthase subunit alpha.